A 729-amino-acid chain; its full sequence is Transketolase (729 aa).

A substrate-binding site is contributed by His97. Thiamine diphosphate contacts are provided by residues His138 and 186–188; that span reads GPL. Residue Asp227 coordinates Mg(2+). Gly228 and Asn257 together coordinate thiamine diphosphate. 2 residues coordinate Mg(2+): Asn257 and Ile259. His332, Arg423, and Ser450 together coordinate substrate. His332 is a binding site for thiamine diphosphate. Glu477 acts as the Proton donor in catalysis. Phe503 contributes to the thiamine diphosphate binding site. Residues His527, Asp535, and Arg586 each contribute to the substrate site.

The protein belongs to the transketolase family. Homodimer. The cofactor is Mg(2+). Ca(2+) serves as cofactor. It depends on Mn(2+) as a cofactor. Requires Co(2+) as cofactor. Thiamine diphosphate is required as a cofactor.

It carries out the reaction D-sedoheptulose 7-phosphate + D-glyceraldehyde 3-phosphate = aldehydo-D-ribose 5-phosphate + D-xylulose 5-phosphate. Functionally, catalyzes the transfer of a two-carbon ketol group from a ketose donor to an aldose acceptor, via a covalent intermediate with the cofactor thiamine pyrophosphate. This chain is Transketolase (tkt), found in Streptococcus pyogenes serotype M18 (strain MGAS8232).